The chain runs to 438 residues: GTPase Obg (438 aa).

Residues 2–160 (NMFVDQIKIE…HYLELELKML (159 aa)) enclose the Obg domain. Positions 161-337 (ADVGLIGFPS…LMQLTADLLD (177 aa)) constitute an OBG-type G domain. Residues 167–174 (GFPSVGKS), 192–196 (FTTLT), 214–217 (DMPG), 284–287 (TKMD), and 318–320 (SAV) each bind GTP. Residues Ser174 and Thr194 each contribute to the Mg(2+) site. The region spanning 360-438 (PDKKDEADFT…IEKFVFEFIQ (79 aa)) is the OCT domain.

This sequence belongs to the TRAFAC class OBG-HflX-like GTPase superfamily. OBG GTPase family. In terms of assembly, monomer. Mg(2+) serves as cofactor.

It is found in the cytoplasm. Functionally, an essential GTPase which binds GTP, GDP and possibly (p)ppGpp with moderate affinity, with high nucleotide exchange rates and a fairly low GTP hydrolysis rate. Plays a role in control of the cell cycle, stress response, ribosome biogenesis and in those bacteria that undergo differentiation, in morphogenesis control. In Limosilactobacillus reuteri (strain DSM 20016) (Lactobacillus reuteri), this protein is GTPase Obg.